We begin with the raw amino-acid sequence, 411 residues long: ACT domain-containing protein ACR9 (411 aa).

3 ACT domains span residues 22 to 105 (VVTV…NVSK), 111 to 194 (LLKF…LAGP), and 243 to 322 (LLQI…VIIV).

Its function is as follows. May bind amino acids. The sequence is that of ACT domain-containing protein ACR9 from Arabidopsis thaliana (Mouse-ear cress).